A 141-amino-acid polypeptide reads, in one-letter code: Nucleoside diphosphate kinase (141 aa).

Lysine 11, phenylalanine 59, arginine 87, threonine 93, arginine 104, and asparagine 114 together coordinate ATP. Histidine 117 serves as the catalytic Pros-phosphohistidine intermediate.

This sequence belongs to the NDK family. As to quaternary structure, homotetramer. Mg(2+) serves as cofactor.

Its subcellular location is the cytoplasm. It carries out the reaction a 2'-deoxyribonucleoside 5'-diphosphate + ATP = a 2'-deoxyribonucleoside 5'-triphosphate + ADP. The catalysed reaction is a ribonucleoside 5'-diphosphate + ATP = a ribonucleoside 5'-triphosphate + ADP. Its function is as follows. Major role in the synthesis of nucleoside triphosphates other than ATP. The ATP gamma phosphate is transferred to the NDP beta phosphate via a ping-pong mechanism, using a phosphorylated active-site intermediate. This Cellvibrio japonicus (strain Ueda107) (Pseudomonas fluorescens subsp. cellulosa) protein is Nucleoside diphosphate kinase.